Here is a 450-residue protein sequence, read N- to C-terminus: Pancreatic triacylglycerol lipase (450 aa).

Cystine bridges form between C4–C10, C91–C102, and C91–C104. S153 serves as the catalytic Nucleophile. Residue N167 is glycosylated (N-linked (GlcNAc...) asparagine). The Charge relay system role is filled by D177. Positions 188, 191, 193, and 196 each coordinate Ca(2+). The cysteines at positions 238 and 262 are disulfide-linked. H264 (charge relay system) is an active-site residue. 3 cysteine pairs are disulfide-bonded: C286-C297, C300-C305, and C434-C450. In terms of domain architecture, PLAT spans 339-450; sequence WRYKVSVTLS…EEVLLTLNPC (112 aa).

The protein belongs to the AB hydrolase superfamily. Lipase family. Forms a 1:1 stoichiometric complex with (pro)colipase/CLPS.

Its subcellular location is the secreted. It catalyses the reaction a triacylglycerol + H2O = a diacylglycerol + a fatty acid + H(+). The enzyme catalyses 1,2,3-tributanoylglycerol + H2O = dibutanoylglycerol + butanoate + H(+). The catalysed reaction is 1,2,3-tri-(9Z-octadecenoyl)-glycerol + H2O = di-(9Z)-octadecenoylglycerol + (9Z)-octadecenoate + H(+). It carries out the reaction all-trans-retinyl hexadecanoate + H2O = all-trans-retinol + hexadecanoate + H(+). It catalyses the reaction 1,2-di-(9Z-octadecenoyl)-glycerol + H2O = (9Z-octadecenoyl)-glycerol + (9Z)-octadecenoate + H(+). Inhibited by bile salts, is reactivated by (pro)colipase/CLPS. Its function is as follows. Plays an important role in fat metabolism. It preferentially splits the esters of long-chain fatty acids at positions 1 and 3, producing mainly 2-monoacylglycerol and free fatty acids, and shows considerably higher activity against insoluble emulsified substrates than against soluble ones. In Sus scrofa (Pig), this protein is Pancreatic triacylglycerol lipase (PNLIP).